The primary structure comprises 200 residues: Gamma-glutamyl-CDP-amidate hydrolase (200 aa).

The region spanning 20–200 (ECLALDWGKL…LKEWFSLIKE (181 aa)) is the Glutamine amidotransferase type-1 domain. Residue C101 is the Nucleophile of the active site. Active-site residues include H178 and E180.

The catalysed reaction is N(5)-(cytidine 5'-diphosphoramidyl)-L-glutamine + H2O = cytidine 5'-diphosphoramidate + L-glutamate + H(+). It participates in capsule biogenesis; capsule polysaccharide biosynthesis. In terms of biological role, involved in the biosynthesis of the O-methyl phosphoramidate (MeOPN) group found on the capsular polysaccharide (CPS) of C.jejuni. Catalyzes the hydrolysis of CDP-L-glutamine to L-glutamate and cytidine diphosphoramidate. The polypeptide is Gamma-glutamyl-CDP-amidate hydrolase (Campylobacter jejuni subsp. jejuni serotype O:2 (strain ATCC 700819 / NCTC 11168)).